The chain runs to 247 residues: Ribosomal RNA small subunit methyltransferase G (247 aa).

Residues Gly84, Phe89, 136 to 137 (AE), and Arg155 contribute to the S-adenosyl-L-methionine site.

The protein belongs to the methyltransferase superfamily. RNA methyltransferase RsmG family.

Its subcellular location is the cytoplasm. Specifically methylates the N7 position of a guanine in 16S rRNA. The sequence is that of Ribosomal RNA small subunit methyltransferase G from Prochlorococcus marinus (strain MIT 9313).